A 451-amino-acid chain; its full sequence is Phosphoglucosamine mutase (451 aa).

Ser102 acts as the Phosphoserine intermediate in catalysis. 4 residues coordinate Mg(2+): Ser102, Asp242, Asp244, and Asp246. Phosphoserine is present on Ser102.

This sequence belongs to the phosphohexose mutase family. Requires Mg(2+) as cofactor. Activated by phosphorylation.

It carries out the reaction alpha-D-glucosamine 1-phosphate = D-glucosamine 6-phosphate. In terms of biological role, catalyzes the conversion of glucosamine-6-phosphate to glucosamine-1-phosphate. In Staphylococcus epidermidis (strain ATCC 35984 / DSM 28319 / BCRC 17069 / CCUG 31568 / BM 3577 / RP62A), this protein is Phosphoglucosamine mutase.